Reading from the N-terminus, the 119-residue chain is uncharacterized protein (119 aa).

Positions 63 to 104 (KKIKKELESNSEKRKAALQMIKEEHTAKVDRYKMIIEDLRQQ) form a coiled coil.

This is an uncharacterized protein from Bacillus subtilis (strain 168).